The chain runs to 44 residues: SPbeta prophage-derived uncharacterized protein YosI (44 aa).

In Bacillus subtilis (strain 168), this protein is SPbeta prophage-derived uncharacterized protein YosI (yosI).